A 226-amino-acid chain; its full sequence is Large ribosomal subunit protein mL67 (226 aa).

This sequence belongs to the mitochondrion-specific ribosomal protein mL67 family. Component of the mitochondrial large ribosomal subunit (mt-LSU). Mature yeast 74S mitochondrial ribosomes consist of a small (37S) and a large (54S) subunit. The 37S small subunit contains a 15S ribosomal RNA (15S mt-rRNA) and 34 different proteins. The 54S large subunit contains a 21S rRNA (21S mt-rRNA) and 46 different proteins.

It is found in the nucleus. Its subcellular location is the mitochondrion. Functionally, component of the mitochondrial ribosome (mitoribosome), a dedicated translation machinery responsible for the synthesis of mitochondrial genome-encoded proteins, including at least some of the essential transmembrane subunits of the mitochondrial respiratory chain. The mitoribosomes are attached to the mitochondrial inner membrane and translation products are cotranslationally integrated into the membrane. mL67/MHR1 also has extraribosomal functions, being involved in regulation of mitochondrial DNA recombination, maintenance and repair, and generation of homoplasmic cells. mL67/MHR1 also acts as transcription factor involved in regulation of RNA polymerase II-dependent transcription. This is Large ribosomal subunit protein mL67 (MHR1) from Saccharomyces cerevisiae (strain ATCC 204508 / S288c) (Baker's yeast).